The primary structure comprises 651 residues: UvrABC system protein C (651 aa).

Positions 20–97 constitute a GIY-YIG domain; that stretch reads ERCGVYRMFD…IKKFQPKFNI (78 aa). A UVR domain is found at 207–242; it reads KALQENLSKKMEELSSQMRFEEAAEIRDRIKALSYV.

This sequence belongs to the UvrC family. Interacts with UvrB in an incision complex.

It localises to the cytoplasm. In terms of biological role, the UvrABC repair system catalyzes the recognition and processing of DNA lesions. UvrC both incises the 5' and 3' sides of the lesion. The N-terminal half is responsible for the 3' incision and the C-terminal half is responsible for the 5' incision. This Rickettsia akari (strain Hartford) protein is UvrABC system protein C.